Reading from the N-terminus, the 107-residue chain is Anti-adapter protein IraM (107 aa).

Belongs to the IraM/RssC family.

The protein localises to the cytoplasm. Inhibits RpoS proteolysis by regulating RssB activity, thereby increasing the stability of the sigma stress factor RpoS during magnesium starvation. The chain is Anti-adapter protein IraM from Shigella dysenteriae serotype 1 (strain Sd197).